The following is a 321-amino-acid chain: uncharacterized protein (321 aa).

Residues 1-22 (MKSIYKYTFMLFVFLFGTLMMA) form the signal peptide.

It belongs to the bacterial solute-binding protein 1 family. WtpA subfamily.

This is an uncharacterized protein from Petrotoga mobilis (strain DSM 10674 / SJ95).